A 494-amino-acid polypeptide reads, in one-letter code: Adenosylhomocysteinase (494 aa).

Positions 72, 155, and 217 each coordinate substrate. Thr-218–Thr-220 contributes to the NAD(+) binding site. Substrate contacts are provided by Lys-247 and Asp-251. Residues Asn-252, Gly-281–Gly-286, Glu-304, Asn-339, Ile-360–His-362, and Asn-408 each bind NAD(+).

It belongs to the adenosylhomocysteinase family. Requires NAD(+) as cofactor.

It localises to the cytoplasm. It catalyses the reaction S-adenosyl-L-homocysteine + H2O = L-homocysteine + adenosine. It participates in amino-acid biosynthesis; L-homocysteine biosynthesis; L-homocysteine from S-adenosyl-L-homocysteine: step 1/1. Its function is as follows. May play a key role in the regulation of the intracellular concentration of adenosylhomocysteine. The chain is Adenosylhomocysteinase from Nocardia farcinica (strain IFM 10152).